The chain runs to 194 residues: RNA polymerase II subunit A C-terminal domain phosphatase SSU72 like protein 2 (194 aa).

The protein belongs to the SSU72 phosphatase family.

It localises to the nucleus. The enzyme catalyses O-phospho-L-seryl-[protein] + H2O = L-seryl-[protein] + phosphate. The catalysed reaction is O-phospho-L-threonyl-[protein] + H2O = L-threonyl-[protein] + phosphate. Protein phosphatase that catalyzes the dephosphorylation of the C-terminal domain of RNA polymerase II. Plays a role in RNA processing and termination. This chain is RNA polymerase II subunit A C-terminal domain phosphatase SSU72 like protein 2, found in Homo sapiens (Human).